The chain runs to 1848 residues: Cellulose-binding protein A (1848 aa).

The signal sequence occupies residues 1–28 (MQKKKSLNLLLALMMVFALVLPSIPALA). Residues 29–190 (ATSSMSVEFY…GAKVLGTAPG (162 aa)) enclose the CBM3 domain. 9 consecutive Cohesin domains span residues 291 to 428 (VTAT…TVTI), 435 to 570 (MQIS…SVTI), 668 to 801 (VTAT…SVTI), 810 to 943 (VTAT…SVTI), 952 to 1085 (VTAT…SVTI), 1094 to 1227 (VTAT…SVTI), 1236 to 1369 (VTAT…SVTI), 1377 to 1511 (VKAT…RLTI), and 1709 to 1847 (FAVK…SVKV).

The N-terminus is blocked. In terms of processing, glycosylated.

The protein localises to the secreted. Binds to cellulose fibers and coordinates cellulase enzymes. This is Cellulose-binding protein A (cbpA) from Clostridium cellulovorans.